A 428-amino-acid chain; its full sequence is MIKPIEYEQLQETLYHEKMSNGLDVYVLPKKGFNKTYAVFTTKYGSIDNRFVPLGKNEMVHVPDGIAHFLEHKLFEKADGDVFQDFSKQGASANAFTSFTRTAYLFSSTSNVERNLETLIDFVQDPYFTEKTVEKEKGIIGQEINMYDDNPDWRLYFGVIENMYKEHPVRIDIAGTVESISHITKDLLYECYETFYHPSNMLLFIVGPVDPEAIISQVRENQGKKPYTDQPEIKREEVKEQEAVFRKEKEIKMNVQGPKCLVGLKSKNPFKLGKELLKHELSMNLLLEALFGKSSAQYESLYEKGYIDETFSFDFTAEYGFGFAAIGGDTPEPDQLAEDISSMLLRAGELITAEKIELARKKKIGTFLKALNSPEYIANQFTRYAFLDMSLFDVVTVLEQITLEDVQNVIQEEIAADRLTVCKVVPKS.

His68 serves as a coordination point for Zn(2+). Glu71 (proton acceptor) is an active-site residue. Zn(2+)-binding residues include His72 and Glu143.

The protein belongs to the peptidase M16 family. The cofactor is Zn(2+).

This is an uncharacterized protein from Bacillus subtilis (strain 168).